The sequence spans 314 residues: Putative S-adenosyl-L-methionine-dependent methyltransferase MAB_3886c (314 aa).

S-adenosyl-L-methionine-binding positions include D133 and 162-163 (DL).

It belongs to the UPF0677 family.

Its function is as follows. Exhibits S-adenosyl-L-methionine-dependent methyltransferase activity. The sequence is that of Putative S-adenosyl-L-methionine-dependent methyltransferase MAB_3886c from Mycobacteroides abscessus (strain ATCC 19977 / DSM 44196 / CCUG 20993 / CIP 104536 / JCM 13569 / NCTC 13031 / TMC 1543 / L948) (Mycobacterium abscessus).